A 153-amino-acid chain; its full sequence is Probable phospholipase A2 homolog 2 (153 aa).

The first 25 residues, 1–25, serve as a signal peptide directing secretion; the sequence is MRFFLKLAPRCSVLLLLLLVTASRG. Intrachain disulfides connect Cys-42–Cys-70, Cys-46–Cys-76, Cys-51–Cys-123, Cys-63–Cys-83, Cys-82–Cys-109, and Cys-89–Cys-102. Ca(2+) is bound by residues Tyr-62, Gly-64, and Tyr-67. His-86 is an active-site residue. Asp-87 is a binding site for Ca(2+).

The protein belongs to the phospholipase A2 family. Requires Ca(2+) as cofactor.

The protein resides in the secreted. The enzyme catalyses a 1,2-diacyl-sn-glycero-3-phosphocholine + H2O = a 1-acyl-sn-glycero-3-phosphocholine + a fatty acid + H(+). PA2 catalyzes the calcium-dependent hydrolysis of the 2-acyl groups in 3-sn-phosphoglycerides. Releases lysophospholipids (LPLs) and free fatty acids (FFAs) from membrane phospholipids in response to hormones and other external stimuli. The sequence is that of Probable phospholipase A2 homolog 2 (PLA2-II) from Oryza sativa subsp. japonica (Rice).